We begin with the raw amino-acid sequence, 793 residues long: Pentatricopeptide repeat-containing protein At1g03100, mitochondrial (793 aa).

Residues 1-87 (MFSLRKTKLQ…REAISSISGS (87 aa)) constitute a mitochondrion transit peptide. PPR repeat units lie at residues 257 to 291 (NTQV…GVKA), 292 to 322 (DANL…IDEA), 330 to 364 (FWQF…GKVA), 458 to 492 (TEEI…DSPV), 495 to 529 (DNSM…GVRT), 530 to 564 (GSSV…GIQL), 565 to 599 (DSSC…KILR), 601 to 631 (GNQK…IREV), 637 to 671 (GVHD…GHSP), 672 to 707 (NAQT…AAAT), and 713 to 747 (DQEL…NMFV).

This sequence belongs to the PPR family. P subfamily.

Its subcellular location is the mitochondrion. The chain is Pentatricopeptide repeat-containing protein At1g03100, mitochondrial from Arabidopsis thaliana (Mouse-ear cress).